The following is a 179-amino-acid chain: Large ribosomal subunit protein uL6 (179 aa).

The protein belongs to the universal ribosomal protein uL6 family. As to quaternary structure, part of the 50S ribosomal subunit.

Functionally, this protein binds to the 23S rRNA, and is important in its secondary structure. It is located near the subunit interface in the base of the L7/L12 stalk, and near the tRNA binding site of the peptidyltransferase center. The chain is Large ribosomal subunit protein uL6 from Halothermothrix orenii (strain H 168 / OCM 544 / DSM 9562).